A 79-amino-acid chain; its full sequence is MFVKTGDKVKVIAGSEKGKEGTVLSVNVKKNRVVVKGVNMIKKATKASASNANGGVVETEGSIHASNVKVIAKAESNKD.

It belongs to the universal ribosomal protein uL24 family. Part of the 50S ribosomal subunit.

One of two assembly initiator proteins, it binds directly to the 5'-end of the 23S rRNA, where it nucleates assembly of the 50S subunit. In terms of biological role, one of the proteins that surrounds the polypeptide exit tunnel on the outside of the subunit. The chain is Large ribosomal subunit protein uL24 from Lactobacillus delbrueckii subsp. bulgaricus (strain ATCC BAA-365 / Lb-18).